The following is a 338-amino-acid chain: MO25-like protein 2 (338 aa).

This sequence belongs to the Mo25 family.

It is found in the cytoplasm. It localises to the cytoskeleton. Its subcellular location is the spindle pole. Its function is as follows. Regulates asymmetric cell division in Q.p neuroblast lineage. Plays a role in cell shedding during embryogenesis. This is MO25-like protein 2 (mop-25.2) from Caenorhabditis elegans.